The following is a 150-amino-acid chain: D-aminoacyl-tRNA deacylase (150 aa).

The Gly-cisPro motif, important for rejection of L-amino acids signature appears at 138 to 139; the sequence is GP.

The protein belongs to the DTD family. As to quaternary structure, homodimer.

It is found in the cytoplasm. The catalysed reaction is glycyl-tRNA(Ala) + H2O = tRNA(Ala) + glycine + H(+). It carries out the reaction a D-aminoacyl-tRNA + H2O = a tRNA + a D-alpha-amino acid + H(+). An aminoacyl-tRNA editing enzyme that deacylates mischarged D-aminoacyl-tRNAs. Also deacylates mischarged glycyl-tRNA(Ala), protecting cells against glycine mischarging by AlaRS. Acts via tRNA-based rather than protein-based catalysis; rejects L-amino acids rather than detecting D-amino acids in the active site. By recycling D-aminoacyl-tRNA to D-amino acids and free tRNA molecules, this enzyme counteracts the toxicity associated with the formation of D-aminoacyl-tRNA entities in vivo and helps enforce protein L-homochirality. In Akkermansia muciniphila (strain ATCC BAA-835 / DSM 22959 / JCM 33894 / BCRC 81048 / CCUG 64013 / CIP 107961 / Muc), this protein is D-aminoacyl-tRNA deacylase.